A 362-amino-acid chain; its full sequence is Protein mom-2 (362 aa).

The first 24 residues, 1–24 (MHINTPVLLAIIYFLVFAPKSADA), serve as a signal peptide directing secretion. 5 disulfides stabilise this stretch: Cys80–Cys91, Cys129–Cys137, Cys139–Cys167, Cys217–Cys231, and Cys219–Cys226. Asn90 carries an N-linked (GlcNAc...) asparagine glycan. Ser223 is lipidated: O-palmitoleoyl serine; by mom-1. The disordered stretch occupies residues 263 to 282 (TVRSSPSAGSSGRSERFARN). The span at 265-274 (RSSPSAGSSG) shows a compositional bias: low complexity. Intrachain disulfides connect Cys304-Cys322, Cys313-Cys317, Cys321-Cys361, Cys337-Cys352, Cys339-Cys349, and Cys344-Cys345.

It belongs to the Wnt family. Palmitoleoylation is required for efficient binding to frizzled receptors. Depalmitoleoylation leads to Wnt signaling pathway inhibition. As to expression, expressed by anchor cell and vulva precursor cell descendants P5.ppa, P5.ppp, P7.paa and P7.pap. Expressed in the tail and weakly expressed in the vulva and body wall muscles.

It is found in the secreted. The protein localises to the extracellular space. Its subcellular location is the extracellular matrix. In terms of biological role, ligand for members of the frizzled family of seven transmembrane receptors. Required in embryonic development for endoderm specification and the correct positioning and orientation of the mitotic spindles and division planes in blastomere cells. Involved in cleavage axis determination. Binds to receptor tyrosine kinase cam-1. Together with wnt ligand lin-44, plays a role in controlling vulva precursor cell P7.p lineage orientation during vulva development, probably by acting as a ligand for tyrosine kinase receptor lin-18. May act redundantly with other Wnt ligands such as cwn-1 and cwn-2 to control seam cell polarity. The protein is Protein mom-2 (mom-2) of Caenorhabditis elegans.